The primary structure comprises 511 residues: MVKQIMIQGTASDAGKSVLVAGLCRLFKNKGKRVVPFKSQNMSLNSFITATGDEMGRAQVFQAEAAGVFPDVRMNPVLLKPTNDRQSQVIFMGAILDNMDAVTYHDFKQTLIPKIQAVYQSLADENDIIVLEGAGSPAEINLNDRDIVNMGMAKMVDAPVVLVADIDKGGVFASIYGTIMLLNEEERARIKGVIINKFRGDVALLQPGIDMIEELTNVPVIGVIPYANLQLEEEDSVSLSGKNYVPDSNALLDIAIICLPRISNFTDFHSLEIQPEISLRYIRNLADFGKPDLVIIPGSKNTLEDMAFLEESGLKKAIQNFAENAGKVIGICGGYQMLGKKMLDPNQVESKQLEIAGLGLLDTETIFLDQKRTTQITGVTHSGEAVEGYEIHMGETKRGESTSPFCEIKAVNGNEETHQDGAISVNKNIIGTYIHGIFDNDVFLGNLFDELLTRKNKSVYPHEIINLKEHKEQEYDKLAALLEANIQMDQLEKIMKGEKICVSTQKPAIKE.

The GATase cobBQ-type domain maps to 251-443 (LLDIAIICLP…IHGIFDNDVF (193 aa)). The active-site Nucleophile is the cysteine 332. The active site involves histidine 435.

The protein belongs to the CobB/CobQ family. CobQ subfamily.

It participates in cofactor biosynthesis; adenosylcobalamin biosynthesis. Functionally, catalyzes amidations at positions B, D, E, and G on adenosylcobyrinic A,C-diamide. NH(2) groups are provided by glutamine, and one molecule of ATP is hydrogenolyzed for each amidation. This chain is Cobyric acid synthase, found in Listeria monocytogenes serotype 4b (strain F2365).